Consider the following 200-residue polypeptide: Glycerol-3-phosphate acyltransferase (200 aa).

A run of 5 helical transmembrane segments spans residues 2 to 22 (FNIPAVAVSYLIGSLSFAVIV), 51 to 71 (KAAALTLLGDAAKGLVAVLLA), 84 to 104 (AIAAVALAALVGHMWPVFFGF), 114 to 134 (LGVLLALSPATALVCALIWLV), and 158 to 178 (LFFMPHTSWIFATLAIAILVL).

It belongs to the PlsY family. As to quaternary structure, probably interacts with PlsX.

The protein resides in the cell inner membrane. The enzyme catalyses an acyl phosphate + sn-glycerol 3-phosphate = a 1-acyl-sn-glycero-3-phosphate + phosphate. It participates in lipid metabolism; phospholipid metabolism. Functionally, catalyzes the transfer of an acyl group from acyl-phosphate (acyl-PO(4)) to glycerol-3-phosphate (G3P) to form lysophosphatidic acid (LPA). This enzyme utilizes acyl-phosphate as fatty acyl donor, but not acyl-CoA or acyl-ACP. The sequence is that of Glycerol-3-phosphate acyltransferase from Neisseria gonorrhoeae (strain ATCC 700825 / FA 1090).